A 688-amino-acid chain; its full sequence is Methionine--tRNA ligase (688 aa).

The 'HIGH' region motif lies at 13–23; it reads PYANGQIHIGH. Zn(2+) is bound by residues C144, C147, C157, and C160. Residues 335–339 carry the 'KMSKS' region motif; sequence KMSKS. ATP is bound at residue K338. The tRNA-binding domain maps to 582 to 688; it reads DFAKIDLRVA…SGAVPGMRIG (107 aa).

It belongs to the class-I aminoacyl-tRNA synthetase family. MetG type 1 subfamily. As to quaternary structure, homodimer. Zn(2+) is required as a cofactor.

It localises to the cytoplasm. It carries out the reaction tRNA(Met) + L-methionine + ATP = L-methionyl-tRNA(Met) + AMP + diphosphate. In terms of biological role, is required not only for elongation of protein synthesis but also for the initiation of all mRNA translation through initiator tRNA(fMet) aminoacylation. The polypeptide is Methionine--tRNA ligase (Cupriavidus pinatubonensis (strain JMP 134 / LMG 1197) (Cupriavidus necator (strain JMP 134))).